A 407-amino-acid polypeptide reads, in one-letter code: MNKSNTISRIGTPLTHNATKVMLLGSGELGKEVIISLQRLGIEVIAVDRYANAPGHQVAHRAYVIDMTDGVALAALINQEKPDLVVPEIEAIATATLLEMENAGNVRVIPTARAAWLTMDREGIRRLAAEELGVATSPYRFADSLKELKAGCADIGYPCVVKPVMSSSGKGQSKLNSADDIEAAWNCAAAGGRVDTGRVIVEGFIDFDYEITLLTVRAIGADGATHTHFCEPIGHLQVNGDYVESWQPQAMHPGALQKAHDIAKKVTDNLGGLGLFGVELFVKHDMVWFSEVSPRPHDTGMVTMASQEQSEFELHAKAILGLPVNVAMKTPAASAVIYGQHDGEVVAFEGVADALRVPGTDVRLFGKPESFARRRMGVALAAAADVETARNNARTAAAKIKPVAHSR.

N(1)-(5-phospho-beta-D-ribosyl)glycinamide is bound by residues 28-29 and glutamate 88; that span reads EL. ATP-binding positions include arginine 121, lysine 162, 167–172, 202–205, and glutamate 210; these read SSGKGQ and EGFI. The ATP-grasp domain occupies 126-320; the sequence is RLAAEELGVA…EFELHAKAIL (195 aa). Residues glutamate 279 and glutamate 291 each coordinate Mg(2+). N(1)-(5-phospho-beta-D-ribosyl)glycinamide is bound by residues aspartate 298, lysine 367, and 374 to 375; that span reads RR.

Belongs to the PurK/PurT family. In terms of assembly, homodimer.

The enzyme catalyses N(1)-(5-phospho-beta-D-ribosyl)glycinamide + formate + ATP = N(2)-formyl-N(1)-(5-phospho-beta-D-ribosyl)glycinamide + ADP + phosphate + H(+). Its pathway is purine metabolism; IMP biosynthesis via de novo pathway; N(2)-formyl-N(1)-(5-phospho-D-ribosyl)glycinamide from N(1)-(5-phospho-D-ribosyl)glycinamide (formate route): step 1/1. Functionally, involved in the de novo purine biosynthesis. Catalyzes the transfer of formate to 5-phospho-ribosyl-glycinamide (GAR), producing 5-phospho-ribosyl-N-formylglycinamide (FGAR). Formate is provided by PurU via hydrolysis of 10-formyl-tetrahydrofolate. The chain is Formate-dependent phosphoribosylglycinamide formyltransferase from Herminiimonas arsenicoxydans.